The sequence spans 52 residues: Defensin-like protein 2B (52 aa).

Disulfide bonds link Cys4/Cys52, Cys16/Cys37, Cys22/Cys46, and Cys26/Cys48.

In terms of assembly, forms oligomers in its native state.

Functionally, possesses antifungal activity sensitive to inorganic cations. The sequence is that of Defensin-like protein 2B from Sinapis alba (White mustard).